The chain runs to 909 residues: Myb-like protein Q (909 aa).

Disordered stretches follow at residues 15 to 65 (TTNN…QQQQ), 84 to 149 (QQQN…QQIL), and 216 to 280 (SAPS…KGPW). Low complexity predominate over residues 17-46 (NNNSNNNNNNNNNNNNNNNNNNNNNINQNH). Basic residues predominate over residues 47–56 (QHQHQHHHHQ). Over residues 84–126 (QQQNYGESTTSTSMIPPSITTSLTPLTPTLSSQPQNIQQQQQQ) the composition is skewed to low complexity. The segment covering 127–139 (QHHHQQQHHHHHQ) has biased composition (basic residues). Residues 216–226 (SAPSTPLSMSP) show a composition bias toward polar residues. HTH myb-type domains follow at residues 272-327 (SPGI…SPEV) and 328-378 (RKTN…LKKI). 2 DNA-binding regions (H-T-H motif) span residues 300–323 (WSSI…FNHL) and 351–374 (WTAI…NSTL). Basic and acidic residues predominate over residues 379–389 (GGDSKSLNKEK). 5 disordered regions span residues 379-482 (GGDS…NTAI), 497-531 (QTTP…QTQQ), 616-642 (SMEQ…QQQQ), 672-748 (YQQQ…HPIE), and 826-855 (LNTT…IPTP). Acidic residues predominate over residues 390–401 (DDDDDDDEDAED). Composition is skewed to low complexity over residues 415–431 (SSSS…TNSS) and 444–482 (STTT…NTAI). Over residues 497 to 508 (QTTPNSSPSLSS) the composition is skewed to polar residues. Low complexity-rich tracts occupy residues 622–642 (YQQQ…QQQQ), 672–726 (YQQQ…QQQQ), 733–744 (NSNNTDTTFSNS), and 826–851 (LNTT…NNNN).

It is found in the nucleus. This Dictyostelium discoideum (Social amoeba) protein is Myb-like protein Q (mybQ).